The chain runs to 136 residues: ATP synthase epsilon chain (136 aa).

Belongs to the ATPase epsilon chain family. As to quaternary structure, F-type ATPases have 2 components, CF(1) - the catalytic core - and CF(0) - the membrane proton channel. CF(1) has five subunits: alpha(3), beta(3), gamma(1), delta(1), epsilon(1). CF(0) has three main subunits: a, b and c.

It localises to the cell membrane. Its function is as follows. Produces ATP from ADP in the presence of a proton gradient across the membrane. This is ATP synthase epsilon chain from Ureaplasma urealyticum serovar 10 (strain ATCC 33699 / Western).